The sequence spans 291 residues: 4-diphosphocytidyl-2-C-methyl-D-erythritol kinase (291 aa).

Residue Lys-19 is part of the active site. 102 to 112 serves as a coordination point for ATP; it reads PMGGGIGGGSS. The active site involves Asp-144.

It belongs to the GHMP kinase family. IspE subfamily.

It catalyses the reaction 4-CDP-2-C-methyl-D-erythritol + ATP = 4-CDP-2-C-methyl-D-erythritol 2-phosphate + ADP + H(+). The protein operates within isoprenoid biosynthesis; isopentenyl diphosphate biosynthesis via DXP pathway; isopentenyl diphosphate from 1-deoxy-D-xylulose 5-phosphate: step 3/6. In terms of biological role, catalyzes the phosphorylation of the position 2 hydroxy group of 4-diphosphocytidyl-2C-methyl-D-erythritol. This is 4-diphosphocytidyl-2-C-methyl-D-erythritol kinase from Ectopseudomonas mendocina (strain ymp) (Pseudomonas mendocina).